The sequence spans 551 residues: Probable glucomannan 4-beta-mannosyltransferase 3 (551 aa).

The chain crosses the membrane as a helical span at residues 60 to 80 (ACLALSAMLLADAVLMAAACF). Residue Asp154 is part of the active site. Residues Asp213 and Asp215 each coordinate substrate. The active site involves Asp307. The next 4 helical transmembrane spans lie at 386–406 (VVAH…SVLI), 409–429 (VTVP…LHAI), 504–524 (ILFS…GGDY), and 525–545 (YFVY…GFCG).

Belongs to the glycosyltransferase 2 family. Plant cellulose synthase-like A subfamily.

It localises to the golgi apparatus membrane. The catalysed reaction is GDP-mannose + (glucomannan)n = GDP + (glucomannan)n+1.. Its function is as follows. Probable mannan synthase which consists of a 4-beta-mannosyltransferase activity on mannan using GDP-mannose. The beta-1,4-mannan product is the backbone for galactomannan synthesis by galactomannan galactosyltransferase. Galactomannan is a noncellulosic polysaccharides of plant cell wall. The chain is Probable glucomannan 4-beta-mannosyltransferase 3 from Oryza sativa subsp. japonica (Rice).